The sequence spans 33 residues: Kappa-sparatoxin-Hv1a (33 aa).

3 disulfides stabilise this stretch: C2–C17, C9–C22, and C16–C27. Position 33 is a tryptophan amide (W33).

In terms of tissue distribution, expressed by the venom gland.

It is found in the secreted. In terms of biological role, blocks transient outward voltage-gated potassium channels in rat ventricular myocytes (thus prolonging action-potential duration) and rat Kv4.2/KCNA4 channels expressed in Xenopus oocytes. Is also a weak blocker of calcium channels in rat cerebellar granule cells. This is Kappa-sparatoxin-Hv1a from Heteropoda venatoria (Brown huntsman spider).